The following is a 299-amino-acid chain: Glycine--tRNA ligase alpha subunit (299 aa).

Belongs to the class-II aminoacyl-tRNA synthetase family. As to quaternary structure, tetramer of two alpha and two beta subunits.

Its subcellular location is the cytoplasm. The enzyme catalyses tRNA(Gly) + glycine + ATP = glycyl-tRNA(Gly) + AMP + diphosphate. The protein is Glycine--tRNA ligase alpha subunit of Caulobacter vibrioides (strain ATCC 19089 / CIP 103742 / CB 15) (Caulobacter crescentus).